The sequence spans 33 residues: Natriuretic peptide NP2 (33 aa).

Cysteines 10 and 26 form a disulfide.

In terms of tissue distribution, expressed by the venom gland.

It localises to the secreted. Snake venom natriuretic peptide that shows an increase in perfusion pressure, urinary flow and glomerular filtration rate. Reduces total and proximal tubular transport of sodium. In the aortic ring assay, causes a relaxant effect in endothelium-intact thoracic aortic rings precontracted with phenylephrine in the presence and absence of isatin, a natriuretic receptor antagonist. The polypeptide is Natriuretic peptide NP2 (Crotalus durissus cascavella (Northeastern Brazilian rattlesnake)).